The following is a 210-amino-acid chain: Type III pantothenate kinase (210 aa).

5-12 (DIGNTYLH) contacts ATP. Substrate is bound by residues Y69 and 73-76 (GVDR). D75 (proton acceptor) is an active-site residue. D90 provides a ligand contact to K(+). S93 serves as a coordination point for ATP. T145 is a substrate binding site.

It belongs to the type III pantothenate kinase family. In terms of assembly, homodimer. NH4(+) is required as a cofactor. Requires K(+) as cofactor.

It localises to the cytoplasm. The catalysed reaction is (R)-pantothenate + ATP = (R)-4'-phosphopantothenate + ADP + H(+). Its pathway is cofactor biosynthesis; coenzyme A biosynthesis; CoA from (R)-pantothenate: step 1/5. In terms of biological role, catalyzes the phosphorylation of pantothenate (Pan), the first step in CoA biosynthesis. The protein is Type III pantothenate kinase of Wolinella succinogenes (strain ATCC 29543 / DSM 1740 / CCUG 13145 / JCM 31913 / LMG 7466 / NCTC 11488 / FDC 602W) (Vibrio succinogenes).